Consider the following 125-residue polypeptide: Prefoldin subunit beta (125 aa).

The protein belongs to the prefoldin subunit beta family. In terms of assembly, heterohexamer of two alpha and four beta subunits.

Its subcellular location is the cytoplasm. Functionally, molecular chaperone capable of stabilizing a range of proteins. Seems to fulfill an ATP-independent, HSP70-like function in archaeal de novo protein folding. The chain is Prefoldin subunit beta from Pyrobaculum islandicum (strain DSM 4184 / JCM 9189 / GEO3).